A 320-amino-acid polypeptide reads, in one-letter code: Cytochrome c biogenesis protein CcsA (320 aa).

8 consecutive transmembrane segments (helical) span residues 14–34 (SFFL…YINI), 37–57 (ITIL…TFLL), 68–88 (LSNL…IHLI), 97–117 (WLGI…TLSL), 143–163 (MMLS…ILII), 228–248 (VISL…VWAN), 263–283 (WALI…IKGW), and 289–309 (AIIA…VNLL).

The protein belongs to the CcmF/CycK/Ccl1/NrfE/CcsA family. As to quaternary structure, may interact with Ccs1.

It is found in the plastid. It localises to the chloroplast thylakoid membrane. In terms of biological role, required during biogenesis of c-type cytochromes (cytochrome c6 and cytochrome f) at the step of heme attachment. The sequence is that of Cytochrome c biogenesis protein CcsA from Marchantia polymorpha (Common liverwort).